The following is a 165-amino-acid chain: Selenoprotein F (165 aa).

The first 31 residues, methionine 1–alanine 31, serve as a signal peptide directing secretion. Selenocysteine 96 is a non-standard amino acid (selenocysteine).

Forms a tight complex with UGGT1/UGCGL1. Interacts with UGGT2/UGCGL2. Interacts with RDH11. Post-translationally, the N-terminus is blocked. In terms of tissue distribution, higher levels in prostate and thyroid gland.

It is found in the endoplasmic reticulum lumen. May be involved in redox reactions associated with the formation of disulfide bonds. May contribute to the quality control of protein folding in the endoplasmic reticulum. May regulate protein folding by enhancing the catalytic activity of UGGT1/UGCGL1 and UGGT2/UGCGL2. The polypeptide is Selenoprotein F (Homo sapiens (Human)).